The primary structure comprises 93 residues: MKKLVLLSALVLLALQVEAEPTPKTDEGTKTDEQPGKEDQVVSVSIEGQGDPAFQDAVLRDLKCFCRRKSCNWGEGIMGICKKRYGSPILCCR.

A signal peptide spans 1–19; it reads MKKLVLLSALVLLALQVEA. Residues 20 to 58 constitute a propeptide that is removed on maturation; sequence EPTPKTDEGTKTDEQPGKEDQVVSVSIEGQGDPAFQDAV. Disulfide bonds link cysteine 64–cysteine 92, cysteine 66–cysteine 81, and cysteine 71–cysteine 91.

The protein belongs to the alpha-defensin family. Small intestine. Not present in heart, liver, spleen, kidney, large intestine and colon.

Its subcellular location is the secreted. Functionally, probably contributes to the antimicrobial barrier function of the small intestine. The protein is Defensin 5 of Rattus norvegicus (Rat).